Consider the following 512-residue polypeptide: ATP synthase subunit alpha, chloroplastic (512 aa).

170 to 177 is a binding site for ATP; the sequence is GDRQTGKT.

It belongs to the ATPase alpha/beta chains family. F-type ATPases have 2 components, CF(1) - the catalytic core - and CF(0) - the membrane proton channel. CF(1) has five subunits: alpha(3), beta(3), gamma(1), delta(1), epsilon(1). CF(0) has four main subunits: a, b, b' and c.

The protein resides in the plastid. Its subcellular location is the chloroplast thylakoid membrane. It catalyses the reaction ATP + H2O + 4 H(+)(in) = ADP + phosphate + 5 H(+)(out). Produces ATP from ADP in the presence of a proton gradient across the membrane. The alpha chain is a regulatory subunit. The protein is ATP synthase subunit alpha, chloroplastic of Staurastrum punctulatum (Green alga).